Consider the following 1548-residue polypeptide: MKPGSDDFLPPPECPVFEPSWAEFRDPLGYIAKIRPIAEKSGICKIRPPADWQPPFAVEVDNFRFTPRIQRLNELEAQTRVKLNYLDQIAKFWEIQGSSLKIPNVERKILDLYSLNKIVMEEGGYEAICKDRRWARVAQRLNYPSGKNIGSLLRSHYERIIYPYEIFQSGANLVQCNTDPFDSEERDKEYKPHSIPLRQSVQPSKFSCYSRRGKRLQPEPEPTEEDIEKNPELKKLQIYGAGPKMIGLGLKAKEKTLRKKDSKQPDKEEVTCPATIVVKGEASEFGKVTSAFSDKNLNHSFEPCMKMTMQLRNNHSSTQFMNSYVCRICSRGDEVDKFLLCDGCSDNYHIFCLLPPLSEVPKGVWRCPKCILAECKSPPEAFGFEQATQEYTLQSFGEMADSFKADYFNMPVHMVPTEVVEKEFWRLVSSIEEDVTVEYGADIHSKEFGSGFPVNNSKWDLSPEEKEYAACGWNLNVMPVLDQSVLCHINADISGMKVPWLYVGMVFSAFCWHIEDHWSYSINYLHWGEPKTWYGVPSLAAEHLEDVMKRLTPELFDSQPDLLHQLVTLMNPNTLMSHGVPVVRTNQCAGEFVITFPRAYHSGFNQGYNFAEAVNFCTADWLPVGRQCIEHYRRLRRYCVFSHEELICKMAAFPEKLDLNLAVAVHKEMFIMVQEERRLRKTLLEKGITEAEREAFELLPDDERQCIKCKTTCFLSALACYDCPDSLVCLSHINDLCKCSRNRQYLRYRYTLDELPAMLQKLKIRAESFDNWANKVQAALEVEDGRKRSFEELRALESEARDRRFPNSELLQRLKKCLTEAEACISQVLGLISNSEDRLQTPQITLTELQLLLKQMGTLPCTMHQIDEVKDVLQQVESYQIETREALTSLPYSLEILQSLMEKGQQLRVEVPEAHQLEELLEQAQWLDQVKQALAPSGQRHSLVIMKKLLVMGTKVASSPSVNKARAELQELLTIAECWEEKAHFCLKASQKHSPATLEVIIREAENIPVYLPNIQSLKEALTKAQAWIADVNEIQNGDHYPCLDDLEGLVAVGRDLPVELEELRQLENQVLTAHSWKEKASKTFLKKNSCYTLLEVLCPCADAGSVSTKRSRWIEKEMGLYKYDTELLGLSAQDLRDPGSVIMAFKEGEEKEKEGILHLRHINSAKPSPMSSSMNASATSICICGQVCAGVESLQCDLCHDWFHGQCVTVPHLLSSVRASHTSSQLLAWWEWDTKFLCPLCMRSRRPRLETILSLLVGLQRLSVRLPEGEALQCLTERAIGWQGRARQALASEDVTALLKQLEKSRQQLQDELRHKKPPTLPSGFAFDCLTENSGKDILKEEEELVLNEERIKSSEKIVPKESSCKGDKELLPSLLSQLTGPVLELPEATRAPLEELMMEGDLLEVTLDENYSIWQLLQAGQNPNLERIHTLLELEKPENPGNWSEEQTPERRRQRRQKVVLSRKGEDFTQKELESKRVKSSRIKPKEEKFQKPILGDNVLYTHHTEHTNILKEHINSVQGKDPSPSSSFPSLTPLLHLSYFHQQKL.

Positions 14–55 (CPVFEPSWAEFRDPLGYIAKIRPIAEKSGICKIRPPADWQPP) constitute a JmjN domain. The region spanning 79-169 (TRVKLNYLDQ…IIYPYEIFQS (91 aa)) is the ARID domain. Glycyl lysine isopeptide (Lys-Gly) (interchain with G-Cter in SUMO2) cross-links involve residues Lys-205, Lys-229, Lys-244, and Lys-279. Residues 208–229 (CYSRRGKRLQPEPEPTEEDIEK) are disordered. 2 positions are modified to phosphoserine: Ser-300 and Ser-316. Residues 325 to 371 (VCRICSRGDEVDKFLLCDGCSDNYHIFCLLPPLSEVPKGVWRCPKCI) form a PHD-type 1 zinc finger. Residue Tyr-439 participates in 2-oxoglutarate binding. The 167-residue stretch at 467 to 633 (EYAACGWNLN…VGRQCIEHYR (167 aa)) folds into the JmjC domain. Fe cation-binding residues include His-513 and Glu-515. Residues Ser-521, Asn-523, and Lys-531 each coordinate 2-oxoglutarate. His-601 serves as a coordination point for Fe cation. The C5HC2 zinc finger occupies 706–758 (CIKCKTTCFLSALACYDCPDSLVCLSHINDLCKCSRNRQYLRYRYTLDELPAM). Residues Ser-889 and Ser-893 each carry the phosphoserine modification. Lys-1123 is covalently cross-linked (Glycyl lysine isopeptide (Lys-Gly) (interchain with G-Cter in SUMO2)). The segment at 1182–1243 (ICICGQVCAG…DTKFLCPLCM (62 aa)) adopts a PHD-type 2 zinc-finger fold. Ser-1355 is subject to Phosphoserine. The segment at 1438 to 1468 (KPENPGNWSEEQTPERRRQRRQKVVLSRKGE) is disordered.

The protein belongs to the JARID1 histone demethylase family. In terms of assembly, interacts withPCGF6, MSH5, ZMYND8, AR. L-ascorbate serves as cofactor. The cofactor is Fe(2+).

The protein localises to the nucleus. It carries out the reaction N(6),N(6),N(6)-trimethyl-L-lysyl(4)-[histone H3] + 3 2-oxoglutarate + 3 O2 = L-lysyl(4)-[histone H3] + 3 formaldehyde + 3 succinate + 3 CO2. In terms of biological role, histone demethylase that specifically demethylates 'Lys-4' of histone H3, thereby playing a central role in histone code. Does not demethylate histone H3 'Lys-9', H3 'Lys-27', H3 'Lys-36', H3 'Lys-79' or H4 'Lys-20'. Demethylates trimethylated and dimethylated but not monomethylated H3 'Lys-4'. May play a role in spermatogenesis. Involved in transcriptional repression of diverse metastasis-associated genes; in this function seems to cooperate with ZMYND8. Suppresses prostate cancer cell invasion. Regulates androgen receptor (AR) transcriptional activity by demethylating H3K4me3 active transcription marks. This chain is Lysine-specific demethylase 5D (Kdm5d), found in Mus musculus (Mouse).